The primary structure comprises 1932 residues: DOCK-like protein 1 (1932 aa).

Residues 1410-1824 (LLEANRPELF…EIERYSRTLS (415 aa)) enclose the DOCKER domain. The span at 1908–1921 (STFLAGSQPNTNTD) shows a compositional bias: polar residues. The disordered stretch occupies residues 1908–1932 (STFLAGSQPNTNTDSQHKHDYSHSG). Positions 1922 to 1932 (SQHKHDYSHSG) are enriched in basic and acidic residues.

Belongs to the DOCK family. As to quaternary structure, forms an active heterodimer with LMO1.

The protein localises to the cytoplasm. The protein resides in the mitochondrion. Its function is as follows. Forms a transiant heterodimeric complex with LMO1, that acts as a guanine nucleotide exchange factor exchange factor (GEF) for the small GTPase RHO5. DCK1, LMO1 and RHO5 relocate to mitochondria upon oxidative stress and trigger cell death. The DCK1/LMO1/RHO5 signaling module mediates mitochondrial turnover under nitrogen starvation conditions via mitophagy. The DCK1/LMO1/RHO5 signaling module plays also a function in cell wall integrity signaling. The chain is DOCK-like protein 1 from Saccharomyces cerevisiae (strain ATCC 204508 / S288c) (Baker's yeast).